The chain runs to 164 residues: Histone H1 (164 aa).

The span at 1–10 (MAPRSSTSKS) shows a compositional bias: polar residues. The tract at residues 1–164 (MAPRSSTSKS…KKSSKPAKKN (164 aa)) is disordered. Residues 16–27 (KDHKKAPIKKAI) are compositionally biased toward basic residues. Phosphothreonine occurs at positions 47 and 54. 3 stretches are compositionally biased toward basic and acidic residues: residues 49 to 61 (VKKD…ADTK), 69 to 89 (TMKE…GDKK), and 117 to 156 (TKKE…DAKK).

In terms of processing, cell-growth/division-associated phosphorylation by a CDC2-like kinase.

It is found in the nucleus. The protein resides in the chromosome. Histones H1 are necessary for the condensation of nucleosome chains into higher-order structures. The polypeptide is Histone H1 (HHO) (Tetrahymena thermophila (strain SB210)).